A 219-amino-acid chain; its full sequence is Formate dehydrogenase 2 subunit beta (cytochrome c-553) (219 aa).

Residues 3–32 (KAFLIDTTRCTACRGCQLACKEWHDLPANV) form the 4Fe-4S ferredoxin-type 1 domain. Residues C12, C15, C18, C22, C74, C77, C82, C124, C141, C144, C156, and C160 each contribute to the [4Fe-4S] cluster site. The 4Fe-4S ferredoxin-type 2 domain maps to 132–171 (DPKTKRITKCDMCFDRVSAGMQPICVKTCPTGTMAFGERD).

As to quaternary structure, heterotrimer of cytochrome c3 FDH2C and formate dehydrogenase FDH2 alpha and beta subunits that forms the FdhABC(3) complex. Requires [4Fe-4S] cluster as cofactor.

Its subcellular location is the periplasm. Beta chain of the formate dehydrogenase (FDH) that catalyzes the reversible two-electron oxidation of formate to carbon dioxide. The beta chain is an electron transfer unit. This Nitratidesulfovibrio vulgaris (strain ATCC 29579 / DSM 644 / CCUG 34227 / NCIMB 8303 / VKM B-1760 / Hildenborough) (Desulfovibrio vulgaris) protein is Formate dehydrogenase 2 subunit beta (cytochrome c-553).